A 437-amino-acid polypeptide reads, in one-letter code: Probable glycine dehydrogenase (decarboxylating) subunit 1 (437 aa).

It belongs to the GcvP family. N-terminal subunit subfamily. In terms of assembly, the glycine cleavage system is composed of four proteins: P, T, L and H. In this organism, the P 'protein' is a heterodimer of two subunits.

The catalysed reaction is N(6)-[(R)-lipoyl]-L-lysyl-[glycine-cleavage complex H protein] + glycine + H(+) = N(6)-[(R)-S(8)-aminomethyldihydrolipoyl]-L-lysyl-[glycine-cleavage complex H protein] + CO2. Its function is as follows. The glycine cleavage system catalyzes the degradation of glycine. The P protein binds the alpha-amino group of glycine through its pyridoxal phosphate cofactor; CO(2) is released and the remaining methylamine moiety is then transferred to the lipoamide cofactor of the H protein. This chain is Probable glycine dehydrogenase (decarboxylating) subunit 1, found in Thermotoga maritima (strain ATCC 43589 / DSM 3109 / JCM 10099 / NBRC 100826 / MSB8).